A 491-amino-acid polypeptide reads, in one-letter code: Acetyl-coenzyme A carboxylase carboxyl transferase subunit beta, chloroplastic (491 aa).

The CoA carboxyltransferase N-terminal domain maps to 229–491 (LWVQCENCYG…FQLHGFFPLT (263 aa)). C233, C236, C252, and C255 together coordinate Zn(2+). The segment at 233 to 255 (CENCYGLNYKQFFRSRLNICEHC) adopts a C4-type zinc-finger fold.

It belongs to the AccD/PCCB family. Acetyl-CoA carboxylase is a heterohexamer composed of biotin carboxyl carrier protein, biotin carboxylase and 2 subunits each of ACCase subunit alpha and ACCase plastid-coded subunit beta (accD). It depends on Zn(2+) as a cofactor.

It localises to the plastid. The protein localises to the chloroplast stroma. It catalyses the reaction N(6)-carboxybiotinyl-L-lysyl-[protein] + acetyl-CoA = N(6)-biotinyl-L-lysyl-[protein] + malonyl-CoA. It functions in the pathway lipid metabolism; malonyl-CoA biosynthesis; malonyl-CoA from acetyl-CoA: step 1/1. Functionally, component of the acetyl coenzyme A carboxylase (ACC) complex. Biotin carboxylase (BC) catalyzes the carboxylation of biotin on its carrier protein (BCCP) and then the CO(2) group is transferred by the transcarboxylase to acetyl-CoA to form malonyl-CoA. The chain is Acetyl-coenzyme A carboxylase carboxyl transferase subunit beta, chloroplastic from Lemna minor (Common duckweed).